The primary structure comprises 299 residues: Bifunctional protein FolD 1 (299 aa).

NADP(+)-binding positions include 168-170 (GRS), serine 193, and isoleucine 234.

It belongs to the tetrahydrofolate dehydrogenase/cyclohydrolase family. In terms of assembly, homodimer.

It catalyses the reaction (6R)-5,10-methylene-5,6,7,8-tetrahydrofolate + NADP(+) = (6R)-5,10-methenyltetrahydrofolate + NADPH. The enzyme catalyses (6R)-5,10-methenyltetrahydrofolate + H2O = (6R)-10-formyltetrahydrofolate + H(+). It participates in one-carbon metabolism; tetrahydrofolate interconversion. Catalyzes the oxidation of 5,10-methylenetetrahydrofolate to 5,10-methenyltetrahydrofolate and then the hydrolysis of 5,10-methenyltetrahydrofolate to 10-formyltetrahydrofolate. This is Bifunctional protein FolD 1 from Rhizobium etli (strain ATCC 51251 / DSM 11541 / JCM 21823 / NBRC 15573 / CFN 42).